We begin with the raw amino-acid sequence, 389 residues long: MKSAALLLPLYAAAFAAAAFHHEHAQAVIQEQQLTIVEPDEYLIELSPGETRWVTENEKWELRKKNINFFDITHNAELGTLKRRINAASVEYPSKPVFNETLAPLLKELDKNNMRAHLETFTSFHTRYYKSQYGVQSSAWLLDQVKKTLADAGASKASVKAFPHPWGQSSIIATIPGKSDKTIVIGAHQDSINLFFPAFLAAPGADDDGSGTVTILEALRVLLKSDEILKGEADNTIEFHWYSAEEGGLLGSQAIFQSYEKEARDVKAMLQQDMTGYVQKTLDAGEPESVGVITDFVDPGLTEFIKKIITVYCDIPYVLTKCGYACSDHASASKAGYPSAFVIESDFKYSDNKIHTTEDKIEYLSFDHMLQHARMTLALAYELAFAEFK.

The N-terminal stretch at 1–18 is a signal peptide; sequence MKSAALLLPLYAAAFAAA. Positions 19-89 are excised as a propeptide; sequence AFHHEHAQAV…TLKRRINAAS (71 aa). N-linked (GlcNAc...) asparagine glycosylation occurs at Asn99. Positions 188, 207, 246, and 273 each coordinate Zn(2+). An intrachain disulfide couples Cys322 to Cys326. His355 contacts Zn(2+).

The protein belongs to the peptidase M28 family. M28E subfamily. In terms of assembly, monomer. The cofactor is Zn(2+).

The protein resides in the secreted. Functionally, extracellular aminopeptidase that allows assimilation of proteinaceous substrates. This is Leucine aminopeptidase 1 (lap1) from Pyrenophora teres f. teres (strain 0-1) (Barley net blotch fungus).